The sequence spans 390 residues: Formate-dependent phosphoribosylglycinamide formyltransferase (390 aa).

N(1)-(5-phospho-beta-D-ribosyl)glycinamide-binding positions include glutamate 19 to leucine 20 and glutamate 79. Residues arginine 111, lysine 152, serine 157–glutamine 162, glutamate 192–valine 195, and glutamate 200 contribute to the ATP site. Positions arginine 116–leucine 305 constitute an ATP-grasp domain. 2 residues coordinate Mg(2+): glutamate 264 and glutamate 276. Residues aspartate 283, lysine 353, and arginine 360–arginine 361 each bind N(1)-(5-phospho-beta-D-ribosyl)glycinamide.

This sequence belongs to the PurK/PurT family. In terms of assembly, homodimer.

The enzyme catalyses N(1)-(5-phospho-beta-D-ribosyl)glycinamide + formate + ATP = N(2)-formyl-N(1)-(5-phospho-beta-D-ribosyl)glycinamide + ADP + phosphate + H(+). Its pathway is purine metabolism; IMP biosynthesis via de novo pathway; N(2)-formyl-N(1)-(5-phospho-D-ribosyl)glycinamide from N(1)-(5-phospho-D-ribosyl)glycinamide (formate route): step 1/1. In terms of biological role, involved in the de novo purine biosynthesis. Catalyzes the transfer of formate to 5-phospho-ribosyl-glycinamide (GAR), producing 5-phospho-ribosyl-N-formylglycinamide (FGAR). Formate is provided by PurU via hydrolysis of 10-formyl-tetrahydrofolate. The sequence is that of Formate-dependent phosphoribosylglycinamide formyltransferase from Marinobacter nauticus (strain ATCC 700491 / DSM 11845 / VT8) (Marinobacter aquaeolei).